A 227-amino-acid polypeptide reads, in one-letter code: tRNA (guanine-N(1)-)-methyltransferase (227 aa).

Residues glycine 111 and 135 to 140 each bind S-adenosyl-L-methionine; that span reads LGDYVL.

It belongs to the RNA methyltransferase TrmD family. Homodimer.

It localises to the cytoplasm. It carries out the reaction guanosine(37) in tRNA + S-adenosyl-L-methionine = N(1)-methylguanosine(37) in tRNA + S-adenosyl-L-homocysteine + H(+). Functionally, specifically methylates guanosine-37 in various tRNAs. The protein is tRNA (guanine-N(1)-)-methyltransferase of Leifsonia xyli subsp. xyli (strain CTCB07).